The primary structure comprises 764 residues: FHF complex subunit HOOK interacting protein 2A (764 aa).

Residues 190-236 are disordered; it reads SEDGPKGQDPGSGDVSQCQQPQELSGATGVEPTESEEEPPHQMDDLS. Residues 203-214 show a composition bias toward polar residues; sequence DVSQCQQPQELS.

This sequence belongs to the FHIP family.

Its function is as follows. May be required for proper functioning of the nervous system. This Mus musculus (Mouse) protein is FHF complex subunit HOOK interacting protein 2A.